The following is a 264-amino-acid chain: Secretory carrier-associated membrane protein 4 (264 aa).

The disordered stretch occupies residues 1–33 (MNRHHDPNPFDEDEEIVNPFSKGGGRVPAASRP). The Cytoplasmic portion of the chain corresponds to 1–122 (MNRHHDPNPF…AQKLQYLAFA (122 aa)). The stretch at 51–85 (MNDSSQKQRKLADWEAELRKKEMDIKRREEAIAKF) forms a coiled coil. 4 helical membrane-spanning segments follow: residues 123–143 (SWLG…VCWI), 150–170 (IFFL…VLWY), 185–205 (FGWF…AAIA), and 233–253 (IFYF…LWVL). Over 254 to 264 (QKIYLYFRGNK) the chain is Cytoplasmic.

This sequence belongs to the SCAMP family.

It localises to the cell membrane. The protein resides in the cytoplasmic vesicle. Its subcellular location is the secretory vesicle membrane. Functionally, probably involved in membrane trafficking. This chain is Secretory carrier-associated membrane protein 4 (SCAMP4), found in Arabidopsis thaliana (Mouse-ear cress).